A 394-amino-acid chain; its full sequence is Lipid-A-disaccharide synthase (394 aa).

This sequence belongs to the LpxB family.

The catalysed reaction is 2-N,3-O-bis[(3R)-3-hydroxytetradecanoyl]-alpha-D-glucosaminyl 1-phosphate + UDP-2-N,3-O-bis[(3R)-3-hydroxytetradecanoyl]-alpha-D-glucosamine = lipid A disaccharide (E. coli) + UDP + H(+). It carries out the reaction a lipid X + a UDP-2-N,3-O-bis[(3R)-3-hydroxyacyl]-alpha-D-glucosamine = a lipid A disaccharide + UDP + H(+). It participates in glycolipid biosynthesis; lipid IV(A) biosynthesis; lipid IV(A) from (3R)-3-hydroxytetradecanoyl-[acyl-carrier-protein] and UDP-N-acetyl-alpha-D-glucosamine: step 5/6. Condensation of UDP-2,3-diacylglucosamine and 2,3-diacylglucosamine-1-phosphate to form lipid A disaccharide, a precursor of lipid A, a phosphorylated glycolipid that anchors the lipopolysaccharide to the outer membrane of the cell. The sequence is that of Lipid-A-disaccharide synthase from Yersinia pestis.